A 403-amino-acid polypeptide reads, in one-letter code: Phosphopentomutase (403 aa).

Mn(2+) is bound by residues D13, D298, H303, D339, H340, and H351.

It belongs to the phosphopentomutase family. Mn(2+) serves as cofactor.

It is found in the cytoplasm. The enzyme catalyses 2-deoxy-alpha-D-ribose 1-phosphate = 2-deoxy-D-ribose 5-phosphate. It catalyses the reaction alpha-D-ribose 1-phosphate = D-ribose 5-phosphate. It participates in carbohydrate degradation; 2-deoxy-D-ribose 1-phosphate degradation; D-glyceraldehyde 3-phosphate and acetaldehyde from 2-deoxy-alpha-D-ribose 1-phosphate: step 1/2. In terms of biological role, isomerase that catalyzes the conversion of deoxy-ribose 1-phosphate (dRib-1-P) and ribose 1-phosphate (Rib-1-P) to deoxy-ribose 5-phosphate (dRib-5-P) and ribose 5-phosphate (Rib-5-P), respectively. The chain is Phosphopentomutase from Streptococcus thermophilus (strain ATCC BAA-250 / LMG 18311).